Here is a 392-residue protein sequence, read N- to C-terminus: Integrin-linked kinase-associated serine/threonine phosphatase 2C (392 aa).

Met1 is modified (N-acetylmethionine). The segment at 1-90 (MDLFGDLPEP…TSEEEKNGSE (90 aa)) is disordered. Ser13 is modified (phosphoserine). A compositionally biased stretch (polar residues) spans 56 to 70 (SGDSGSLATSISQMV). Basic and acidic residues predominate over residues 72 to 90 (TEGKGAKRKTSEEEKNGSE). Residues 108–390 (KGYVAERKGE…DNVTVMVVRI (283 aa)) enclose the PPM-type phosphatase domain. Mn(2+)-binding residues include Asp152 and Gly153. Lys210 is modified (N6-acetyllysine). Residues Asp326 and Asp381 each contribute to the Mn(2+) site.

It belongs to the PP2C family. As to quaternary structure, interacts with ILK. Specific association with ILK is independent of the catalytic activity of either partner. Mg(2+) is required as a cofactor. Requires Mn(2+) as cofactor. Widely expressed. Highest levels expressed in striated muscle. Much lower levels evident in various smooth muscle tissues.

The protein resides in the cytoplasm. The catalysed reaction is O-phospho-L-seryl-[protein] + H2O = L-seryl-[protein] + phosphate. It carries out the reaction O-phospho-L-threonyl-[protein] + H2O = L-threonyl-[protein] + phosphate. With respect to regulation, inhibited rather than stimulated by magnesium. Its function is as follows. Protein phosphatase that may play a role in regulation of cell cycle progression via dephosphorylation of its substrates whose appropriate phosphorylation states might be crucial for cell proliferation. Selectively associates with integrin linked kinase (ILK), to modulate cell adhesion and growth factor signaling. Inhibits the ILK-GSK3B signaling axis and may play an important role in inhibiting oncogenic transformation. This is Integrin-linked kinase-associated serine/threonine phosphatase 2C (ILKAP) from Homo sapiens (Human).